The sequence spans 750 residues: MIIRSPEPEVKILVDRDPIKTSFEEWAKPGHFSRTIAKGPDTTTWIWNLHADAHDFDSHTSDLEEISRKVFSAHFGQLSIIFLWLSGMYFHGARFSNYEAWLSDPTHIGPSAQVVWPIVGQEILNGDVGGGFRGIQITSGFFQIWRASGITSELQLYCTAIGALVFAALMLFAGWFHYHKAAPKLAWFQDVESMLNHHLAGLLGLGSLSWAGHQVHVSLPINQFLNAGVDPKEIPLPHEFILNRDLLAQLYPSFSEGATPFFTLNWSKYSEFLTFRGGLDPVTGGLWLTDIAHHHLAIAILFLIAGHMYRTNWGIGHGLKDILEAHKGPFTGQGHKGLYEILTTSWHAQLSLNLAMLGSLTIVVAHHMYSMPPYPYLATDYATQLSLFTHHMWIGGFLIVGAAAHAAIFMVRDYDPTNRYNDLLDRVLRHRDAIISHLNWVCIFLGFHSFGLYIHNDTMSALGRPQDMFSDTAIQLQPVFAQWIQNTHALAPGVTAPGETASTSLTWGGGELVAVGGKVALLPIPLGTADFLVHHIHAFTIHVTVLILLKGVLFARSSRLIPDKANLGFRFPCDGPGRGGTCQVSAWDHVFLGLFWMYNAISVVIFHFSWKMQSDVWGSISDQGVVTHITGGNFAQSSITINGWLRDFLWAQASQVIQSYGSSLSAYGLFFLGAHFVWAFSLMFLFSGRGYWQELIESIVWAHNKLKVAPATQPRALSIVQGRAVGVTHYLLGGIATTWAFFLARIIAVG.

Helical transmembrane passes span 70-93 (VFSA…FHGA), 156-179 (LYCT…FHYH), 195-219 (LNHH…HVSL), 291-309 (IAHH…GHMY), 346-369 (WHAQ…HHMY), 385-411 (LSLF…IFMV), 433-455 (AIIS…LYIH), and 531-549 (FLVH…LILL). Cys-573 and Cys-582 together coordinate [4Fe-4S] cluster. 2 helical membrane passes run 589-610 (HVFL…HFSW) and 664-686 (LSAY…MFLF). A chlorophyll a'-binding site is contributed by His-675. 2 residues coordinate chlorophyll a: Met-683 and Tyr-691. Trp-692 contributes to the phylloquinone binding site. Residues 724–744 (AVGVTHYLLGGIATTWAFFLA) traverse the membrane as a helical segment.

It belongs to the PsaA/PsaB family. The PsaA/B heterodimer binds the P700 chlorophyll special pair and subsequent electron acceptors. PSI consists of a core antenna complex that captures photons, and an electron transfer chain that converts photonic excitation into a charge separation. The eukaryotic PSI reaction center is composed of at least 11 subunits. P700 is a chlorophyll a/chlorophyll a' dimer, A0 is one or more chlorophyll a, A1 is one or both phylloquinones and FX is a shared 4Fe-4S iron-sulfur center. is required as a cofactor.

It localises to the plastid. It is found in the chloroplast thylakoid membrane. It carries out the reaction reduced [plastocyanin] + hnu + oxidized [2Fe-2S]-[ferredoxin] = oxidized [plastocyanin] + reduced [2Fe-2S]-[ferredoxin]. Its function is as follows. PsaA and PsaB bind P700, the primary electron donor of photosystem I (PSI), as well as the electron acceptors A0, A1 and FX. PSI is a plastocyanin-ferredoxin oxidoreductase, converting photonic excitation into a charge separation, which transfers an electron from the donor P700 chlorophyll pair to the spectroscopically characterized acceptors A0, A1, FX, FA and FB in turn. Oxidized P700 is reduced on the lumenal side of the thylakoid membrane by plastocyanin. In Lobularia maritima (Sweet alyssum), this protein is Photosystem I P700 chlorophyll a apoprotein A1.